The chain runs to 475 residues: Adenylyl cyclase-associated protein 1 (475 aa).

Position 2 is an N-acetylalanine (A2). Y31 is subject to Phosphotyrosine. A Phosphoserine modification is found at S34. The residue at position 81 (K81) is an N6-acetyllysine. 2 disordered regions span residues 216 to 255 (ELSG…ASRS) and 278 to 318 (MKTH…TKKE). The span at 218–228 (SGLPSGPSAGS) shows a compositional bias: low complexity. Over residues 229–242 (GPPPPPPGPPPPPV) the composition is skewed to pro residues. The span at 243 to 255 (STSSGSDESASRS) shows a compositional bias: low complexity. Residue K287 is modified to N6-methyllysine. A phosphoserine mark is found at S290, S295, and S301. Residues 300-312 (FSAPKPQTSPSPK) are compositionally biased toward pro residues. At T307 the chain carries Phosphothreonine. A phosphoserine mark is found at S308 and S310. The C-CAP/cofactor C-like domain maps to 313-453 (PATKKEPAVL…EGGDFNEFPV (141 aa)). A Glycyl lysine isopeptide (Lys-Gly) (interchain with G-Cter in SUMO1) cross-link involves residue K348.

It belongs to the CAP family. As to quaternary structure, homodimer. Binds actin monomers.

Its subcellular location is the cell membrane. In terms of biological role, directly regulates filament dynamics and has been implicated in a number of complex developmental and morphological processes, including mRNA localization and the establishment of cell polarity. The protein is Adenylyl cyclase-associated protein 1 (CAP1) of Macaca fascicularis (Crab-eating macaque).